The sequence spans 479 residues: NADH-quinone oxidoreductase subunit N 2 (479 aa).

14 consecutive transmembrane segments (helical) span residues 4–24 (FVSF…FVVT), 43–63 (GVLV…SGAY), 67–87 (AFSQ…GILS), 99–119 (PEYF…VSSI), 121–141 (VITL…MVAM), 159–179 (IMFG…LYGL), 201–221 (AVTG…VFPF), 239–259 (LIAS…VSLA), 267–287 (ATLL…IALV), 294–314 (LLGF…VAMD), 318–338 (FASA…CFVV), 364–384 (LAVT…FVGF), 401–421 (ALVV…LQIV), and 444–464 (ALCV…AFTI).

The protein belongs to the complex I subunit 2 family. As to quaternary structure, NDH-1 is composed of 14 different subunits. Subunits NuoA, H, J, K, L, M, N constitute the membrane sector of the complex.

The protein localises to the cell inner membrane. The enzyme catalyses a quinone + NADH + 5 H(+)(in) = a quinol + NAD(+) + 4 H(+)(out). In terms of biological role, NDH-1 shuttles electrons from NADH, via FMN and iron-sulfur (Fe-S) centers, to quinones in the respiratory chain. The immediate electron acceptor for the enzyme in this species is believed to be ubiquinone. Couples the redox reaction to proton translocation (for every two electrons transferred, four hydrogen ions are translocated across the cytoplasmic membrane), and thus conserves the redox energy in a proton gradient. The protein is NADH-quinone oxidoreductase subunit N 2 of Opitutus terrae (strain DSM 11246 / JCM 15787 / PB90-1).